The sequence spans 377 residues: Flagellin C (377 aa).

Coiled coils occupy residues Ser103 to Thr129 and Val301 to Asp340.

It belongs to the bacterial flagellin family. In terms of assembly, heteromer of multiple flagellin subunits including FlaA, FlaB, FlaC, FlaD and possibly FlaE.

It is found in the secreted. Its subcellular location is the bacterial flagellum. Flagellin is the subunit protein which polymerizes to form the filaments of bacterial flagella. FlaC is not essential for flagellar synthesis and motility. The sequence is that of Flagellin C (flaC) from Vibrio anguillarum (Listonella anguillarum).